We begin with the raw amino-acid sequence, 477 residues long: HPREQVQLLAKKQVLQEALQALQVALCSQAKLQAQRELLQAKLEQLGPGEPPPVLLLQDDRHSTSSSEQEREGGRTPTLEILKSHISGIFRPKFSLPPPLQLVPEVQKPLHEQLWYHGALPRAEVAELLTHSGDFLVRESQGKQEYVLSVLWDGQPRHFIIQSADNLYRPEGDGFASIPLLVDHLLRSQQPLTKKSGIVLNRAVPKDKWVLNHEDLVLGEQIGRGNFGEVFSGRLRADNTLVAVKSCRETLPPDIKAKFLQEAKILKQYSHPNIVRLIGVCTQKQPIYIVMELVQGGDFLTFLRTEGARLRMKTLLQMVGDAAAGMEYLESKCCIHRDLAARNCLVTEKNVLKISDFGMSREEADGVYAASGGLRLVPVKWTAPEALNYGRYSSESDVWSFGILLWETFSLGASPYPNLSNQQTREFVEKGGRLPCPELCPDAVFRLMEQCWAYEPGQRPSFSAFYQELQSIRKRHR.

The disordered stretch occupies residues 49–76; it reads GEPPPVLLLQDDRHSTSSSEQEREGGRT. Residues 58–74 are compositionally biased toward basic and acidic residues; it reads QDDRHSTSSSEQEREGG. The SH2 domain occupies 115 to 204; that stretch reads WYHGALPRAE…KSGIVLNRAV (90 aa). The Protein kinase domain occupies 216–477; it reads LVLGEQIGRG…ELQSIRKRHR (262 aa). Residues 222–230 and K245 each bind ATP; that span reads IGRGNFGEV. Catalysis depends on D338, which acts as the Proton acceptor. Y368 carries the phosphotyrosine; by autocatalysis modification.

The protein belongs to the protein kinase superfamily. Tyr protein kinase family. Fes/fps subfamily.

The enzyme catalyses L-tyrosyl-[protein] + ATP = O-phospho-L-tyrosyl-[protein] + ADP + H(+). This Feline sarcoma virus (strain Snyder-Theilen) protein is Tyrosine-protein kinase transforming protein Fes (V-FES).